A 190-amino-acid chain; its full sequence is Cancer-related nucleoside-triphosphatase homolog (190 aa).

ATP is bound by residues 9–16 (GPPGVGKT) and 109–116 (VCIIDEIG). Lysine 165 is subject to N6-acetyllysine.

It belongs to the THEP1 NTPase family. As to quaternary structure, monomer.

It catalyses the reaction a ribonucleoside 5'-triphosphate + H2O = a ribonucleoside 5'-diphosphate + phosphate + H(+). The catalysed reaction is 5-methyl-UTP + H2O = 5-methyl-UDP + phosphate + H(+). The enzyme catalyses CTP + H2O = CDP + phosphate + H(+). It carries out the reaction ATP + H2O = ADP + phosphate + H(+). It catalyses the reaction GTP + H2O = GDP + phosphate + H(+). Its function is as follows. Has nucleotide phosphatase activity towards ATP, GTP, CTP, TTP and UTP. Hydrolyzes nucleoside diphosphates with lower efficiency. This is Cancer-related nucleoside-triphosphatase homolog from Mus musculus (Mouse).